A 293-amino-acid polypeptide reads, in one-letter code: Ribosomal RNA small subunit methyltransferase A (293 aa).

S-adenosyl-L-methionine is bound by residues asparagine 33, valine 35, glycine 60, glutamate 81, aspartate 111, and asparagine 130.

This sequence belongs to the class I-like SAM-binding methyltransferase superfamily. rRNA adenine N(6)-methyltransferase family. RsmA subfamily.

It is found in the cytoplasm. It catalyses the reaction adenosine(1518)/adenosine(1519) in 16S rRNA + 4 S-adenosyl-L-methionine = N(6)-dimethyladenosine(1518)/N(6)-dimethyladenosine(1519) in 16S rRNA + 4 S-adenosyl-L-homocysteine + 4 H(+). Functionally, specifically dimethylates two adjacent adenosines (A1518 and A1519) in the loop of a conserved hairpin near the 3'-end of 16S rRNA in the 30S particle. May play a critical role in biogenesis of 30S subunits. The polypeptide is Ribosomal RNA small subunit methyltransferase A (Corynebacterium glutamicum (strain R)).